Here is a 461-residue protein sequence, read N- to C-terminus: Coronin-1A (461 aa).

N-acetylserine is present on serine 2. Serine 2 is subject to Phosphoserine; by PKC. 7 WD repeats span residues 13 to 63 (HVFG…LVLP), 73 to 110 (NVPL…MVWE), 123 to 160 (PVVT…LVWD), 164 to 204 (GAAV…RVIE), 207 to 251 (KGTV…ALWD), 258 to 296 (PLSL…RYFE), and 302 to 349 (PFLH…EPIA). The span at 407–418 (NRGLDSARRRAT) shows a compositional bias: basic and acidic residues. The disordered stretch occupies residues 407 to 431 (NRGLDSARRRATPEPSSTLSSDTVS). The residue at position 412 (serine 412) is a Phosphoserine; by PKC. The residue at position 418 (threonine 418) is a Phosphothreonine. Over residues 420 to 430 (EPSSTLSSDTV) the composition is skewed to polar residues. Serine 422 is modified (phosphoserine). A coiled-coil region spans residues 425-461 (LSSDTVSRLEEDVRNLNAIVQKLQERLDRLEETVQAK).

Belongs to the WD repeat coronin family. As to quaternary structure, binds actin. Phosphorylation at Ser-412 by PKC strongly down-regulates the association with actin. Post-translationally, polyubiquitinated by RNF128 with 'Lys-48'-linked chains, leading to proteasomal degradation.

The protein resides in the cytoplasm. Its subcellular location is the cytoskeleton. It localises to the cell cortex. The protein localises to the cytoplasmic vesicle. It is found in the phagosome membrane. Functionally, may be a crucial component of the cytoskeleton of highly motile cells, functioning both in the invagination of large pieces of plasma membrane, as well as in forming protrusions of the plasma membrane involved in cell locomotion. This is Coronin-1A (Coro1a) from Rattus norvegicus (Rat).